The sequence spans 603 residues: Elongation factor 4 (603 aa).

A tr-type G domain is found at 2-184 (NHIRNFSIIA…AVVARMPPPR (183 aa)). Residues 14–19 (DHGKST) and 131–134 (NKMD) contribute to the GTP site.

The protein belongs to the TRAFAC class translation factor GTPase superfamily. Classic translation factor GTPase family. LepA subfamily.

It is found in the cell inner membrane. The enzyme catalyses GTP + H2O = GDP + phosphate + H(+). Functionally, required for accurate and efficient protein synthesis under certain stress conditions. May act as a fidelity factor of the translation reaction, by catalyzing a one-codon backward translocation of tRNAs on improperly translocated ribosomes. Back-translocation proceeds from a post-translocation (POST) complex to a pre-translocation (PRE) complex, thus giving elongation factor G a second chance to translocate the tRNAs correctly. Binds to ribosomes in a GTP-dependent manner. The sequence is that of Elongation factor 4 from Albidiferax ferrireducens (strain ATCC BAA-621 / DSM 15236 / T118) (Rhodoferax ferrireducens).